The chain runs to 557 residues: Dihydroxy-acid dehydratase (557 aa).

Residue Asp-78 coordinates Mg(2+). A [2Fe-2S] cluster-binding site is contributed by Cys-119. 2 residues coordinate Mg(2+): Asp-120 and Lys-121. At Lys-121 the chain carries N6-carboxylysine. A [2Fe-2S] cluster-binding site is contributed by Cys-192. Glu-442 serves as a coordination point for Mg(2+). Residue Ser-468 is the Proton acceptor of the active site.

The protein belongs to the IlvD/Edd family. As to quaternary structure, homodimer. [2Fe-2S] cluster serves as cofactor. Mg(2+) is required as a cofactor.

The enzyme catalyses (2R)-2,3-dihydroxy-3-methylbutanoate = 3-methyl-2-oxobutanoate + H2O. It catalyses the reaction (2R,3R)-2,3-dihydroxy-3-methylpentanoate = (S)-3-methyl-2-oxopentanoate + H2O. It functions in the pathway amino-acid biosynthesis; L-isoleucine biosynthesis; L-isoleucine from 2-oxobutanoate: step 3/4. Its pathway is amino-acid biosynthesis; L-valine biosynthesis; L-valine from pyruvate: step 3/4. Its function is as follows. Functions in the biosynthesis of branched-chain amino acids. Catalyzes the dehydration of (2R,3R)-2,3-dihydroxy-3-methylpentanoate (2,3-dihydroxy-3-methylvalerate) into 2-oxo-3-methylpentanoate (2-oxo-3-methylvalerate) and of (2R)-2,3-dihydroxy-3-methylbutanoate (2,3-dihydroxyisovalerate) into 2-oxo-3-methylbutanoate (2-oxoisovalerate), the penultimate precursor to L-isoleucine and L-valine, respectively. The protein is Dihydroxy-acid dehydratase of Bacillus cereus (strain ZK / E33L).